A 391-amino-acid chain; its full sequence is Processive diacylglycerol beta-glucosyltransferase (391 aa).

Belongs to the glycosyltransferase 28 family. UgtP subfamily.

It is found in the cell membrane. It carries out the reaction a 1,2-diacyl-3-O-(beta-D-glucopyranosyl)-sn-glycerol + UDP-alpha-D-glucose = a 1,2-diacyl-3-O-(beta-D-Glc-(1-&gt;6)-beta-D-Glc)-sn-glycerol + UDP + H(+). The catalysed reaction is a 1,2-diacyl-sn-glycerol + UDP-alpha-D-glucose = a 1,2-diacyl-3-O-(beta-D-glucopyranosyl)-sn-glycerol + UDP + H(+). It functions in the pathway glycolipid metabolism; diglucosyl-diacylglycerol biosynthesis. Functionally, processive glucosyltransferase involved in the biosynthesis of both the bilayer- and non-bilayer-forming membrane glucolipids. Is able to successively transfer two glucosyl residues to diacylglycerol (DAG), thereby catalyzing the formation of beta-monoglucosyl-DAG (3-O-(beta-D-glucopyranosyl)-1,2-diacyl-sn-glycerol) and beta-diglucosyl-DAG (3-O-(beta-D-glucopyranosyl-beta-(1-&gt;6)-D-glucopyranosyl)-1,2-diacyl-sn-glycerol). Beta-diglucosyl-DAG is the predominant glycolipid found in Bacillales and is also used as a membrane anchor for lipoteichoic acid (LTA). The protein is Processive diacylglycerol beta-glucosyltransferase of Staphylococcus epidermidis (strain ATCC 12228 / FDA PCI 1200).